The primary structure comprises 138 residues: Large ribosomal subunit protein uL16 (138 aa).

The span at 1 to 16 shows a compositional bias: basic residues; sequence MLIPRRVKHRKQHHPS. A disordered region spans residues 1 to 25; it reads MLIPRRVKHRKQHHPSRSGAAKGGT.

It belongs to the universal ribosomal protein uL16 family. Part of the 50S ribosomal subunit.

Binds 23S rRNA and is also seen to make contacts with the A and possibly P site tRNAs. This Rhodococcus erythropolis (strain PR4 / NBRC 100887) protein is Large ribosomal subunit protein uL16.